The primary structure comprises 449 residues: uncharacterized protein (449 aa).

Positions 1–20 are cleaved as a signal peptide; it reads MWTALVLIWIFSLSLSESHA. Residues 21–400 lie on the Extracellular side of the membrane; sequence ASNDPRNFVP…PLTQAVVDKT (380 aa). N-linked (GlcNAc...) asparagine glycosylation is present at Asn-49. 3 disordered regions span residues 72–101, 154–187, and 215–381; these read AHLN…AADG, MTAA…GHPS, and QTVA…PSTQ. Composition is skewed to low complexity over residues 154 to 184 and 215 to 234; these read MTAA…TATG and QTVA…PSPS. Polar residues-rich tracts occupy residues 255–279 and 352–367; these read GPIS…MPSN and TPGT…SSGG. The helical transmembrane segment at 401–421 threads the bilayer; that stretch reads LLLVVLLLGVTLFITVLVLFA. Over 422–449 the chain is Cytoplasmic; the sequence is LQAYESYKKKDYTQVDYLINGMYADSEM.

In terms of tissue distribution, highest expression in heart, placenta, liver, pancreas and colon. Also detected in brain, lung, skeletal muscle, kidney, spleen, prostate, testis, ovary and small intestine. Lowest expression in thymus and leukocytes.

The protein resides in the cell membrane. It localises to the golgi apparatus. Its subcellular location is the trans-Golgi network membrane. This is an uncharacterized protein from Homo sapiens (Human).